Here is a 502-residue protein sequence, read N- to C-terminus: UPF0371 protein CLB_0371 (502 aa).

Belongs to the UPF0371 family.

In Clostridium botulinum (strain ATCC 19397 / Type A), this protein is UPF0371 protein CLB_0371.